Reading from the N-terminus, the 396-residue chain is 1-deoxy-D-xylulose 5-phosphate reductoisomerase (396 aa).

Residues Thr10, Gly11, Ser12, Ile13, Gly36, Lys37, Asn38, and Asn124 each coordinate NADPH. Lys125 contributes to the 1-deoxy-D-xylulose 5-phosphate binding site. Glu126 contributes to the NADPH binding site. Asp150 serves as a coordination point for Mn(2+). 4 residues coordinate 1-deoxy-D-xylulose 5-phosphate: Ser151, Glu152, Ser186, and His209. Residue Glu152 coordinates Mn(2+). Gly215 is a binding site for NADPH. Residues Ser222, Asn227, Lys228, and Glu231 each coordinate 1-deoxy-D-xylulose 5-phosphate. Glu231 contacts Mn(2+).

It belongs to the DXR family. The cofactor is Mg(2+). Mn(2+) is required as a cofactor.

The enzyme catalyses 2-C-methyl-D-erythritol 4-phosphate + NADP(+) = 1-deoxy-D-xylulose 5-phosphate + NADPH + H(+). The protein operates within isoprenoid biosynthesis; isopentenyl diphosphate biosynthesis via DXP pathway; isopentenyl diphosphate from 1-deoxy-D-xylulose 5-phosphate: step 1/6. Functionally, catalyzes the NADPH-dependent rearrangement and reduction of 1-deoxy-D-xylulose-5-phosphate (DXP) to 2-C-methyl-D-erythritol 4-phosphate (MEP). This Glaesserella parasuis serovar 5 (strain SH0165) (Haemophilus parasuis) protein is 1-deoxy-D-xylulose 5-phosphate reductoisomerase.